Reading from the N-terminus, the 340-residue chain is Phosphate acyltransferase (340 aa).

This sequence belongs to the PlsX family. In terms of assembly, homodimer. Probably interacts with PlsY.

It localises to the cytoplasm. It carries out the reaction a fatty acyl-[ACP] + phosphate = an acyl phosphate + holo-[ACP]. It participates in lipid metabolism; phospholipid metabolism. In terms of biological role, catalyzes the reversible formation of acyl-phosphate (acyl-PO(4)) from acyl-[acyl-carrier-protein] (acyl-ACP). This enzyme utilizes acyl-ACP as fatty acyl donor, but not acyl-CoA. The polypeptide is Phosphate acyltransferase (Pseudomonas syringae pv. syringae (strain B728a)).